The primary structure comprises 80 residues: Mu-conotoxin BuIIIC (80 aa).

The first 22 residues, 1 to 22 (MMSKLGVLLTICLLLFPLFALP), serve as a signal peptide directing secretion. A propeptide spanning residues 23 to 51 (QDGDQPADRPAERMQDDLSSEQHPLFEKR) is cleaved from the precursor. 3 disulfide bridges follow: Cys-56/Cys-70, Cys-57/Cys-76, and Cys-66/Cys-77. Residue Cys-77 is modified to Cysteine amide.

It belongs to the conotoxin M superfamily. As to expression, expressed by the venom duct.

Its subcellular location is the secreted. Mu-conotoxins block voltage-gated sodium channels. Extremely potent inhibitor of Nav1.4/SCN4A (96% inhibition at 1 uM). The inhibition is very slowly reversible. In Conus bullatus (Bubble cone), this protein is Mu-conotoxin BuIIIC.